The following is a 553-amino-acid chain: Solute carrier family 45 member 3 (553 aa).

A run of 11 helical transmembrane segments spans residues 19–39 (LLIN…ITYV), 52–72 (FMTM…PLLG), 88–108 (FIWA…RAGW), 120–140 (LELA…QVCF), 161–181 (YSVY…LPAI), 198–218 (CLFG…LLVA), 275–295 (FVAE…YTDF), 323–343 (MGSL…LVMD), 353–373 (AVYL…CLSH), 382–402 (AALT…LASL), and 522–542 (AYMV…TQVV).

This sequence belongs to the glycoside-pentoside-hexuronide (GPH) cation symporter transporter (TC 2.A.2) family.

It localises to the membrane. The enzyme catalyses sucrose(out) + H(+)(out) = sucrose(in) + H(+)(in). In terms of biological role, proton-associated sucrose transporter. May be able to transport also glucose and fructose. This is Solute carrier family 45 member 3 (SLC45A3) from Macaca fascicularis (Crab-eating macaque).